Reading from the N-terminus, the 86-residue chain is Beta-toxin Tz1 (86 aa).

Positions 1–20 (MTRFVLFICCFFLIGMVVEC) are cleaved as a signal peptide. Residues 21–83 (KDGYLVGNDG…TWDRATNRCG (63 aa)) enclose the LCN-type CS-alpha/beta domain. 4 cysteine pairs are disulfide-bonded: C31–C82, C35–C57, C43–C63, and C47–C65. R84 is modified (arginine amide).

This sequence belongs to the long (4 C-C) scorpion toxin superfamily. Sodium channel inhibitor family. Beta subfamily. As to expression, expressed by the venom gland.

Its subcellular location is the secreted. Functionally, beta toxins bind voltage-independently at site-4 of sodium channels (Nav) and shift the voltage of activation toward more negative potentials thereby affecting sodium channel activation and promoting spontaneous and repetitive firing. Strongly affects skeletal muscle channels Nav1.4/SCN4A, poorly affects the neuronal channels Nav1.6/SCN8A and Nav1.2/SCN2A. Induces spastic paralysis of rear limbs, increased salivation, apnea, tachycardia and increased perspiration. The chain is Beta-toxin Tz1 from Tityus zulianus (Venezuelan scorpion).